A 524-amino-acid chain; its full sequence is mRNA cap guanine-N(7) methyltransferase (524 aa).

Residues 1–155 are disordered; that stretch reads MSDKEAGVAS…DKKRAHDEAE (155 aa). Residues 19-40 are compositionally biased toward basic and acidic residues; sequence NKDEVDVKNTEEHSKQESKSDI. Residues 68 to 77 show a composition bias toward polar residues; sequence NNKVISSVYN. A compositionally biased stretch (basic and acidic residues) spans 90 to 99; the sequence is KTTDKYDKYG. Over residues 100–112 the composition is skewed to polar residues; that stretch reads SRSTPIATPTAPV. Residues 214–522 enclose the mRNA cap 0 methyltransferase domain; that stretch reads SPIYKLRNFN…FYIGFVFEKL (309 aa). 223 to 224 lines the mRNA pocket; that stretch reads NN. Positions 227, 251, 273, 319, 349, and 354 each coordinate S-adenosyl-L-methionine.

The protein belongs to the class I-like SAM-binding methyltransferase superfamily. mRNA cap 0 methyltransferase family.

It localises to the nucleus. It carries out the reaction a 5'-end (5'-triphosphoguanosine)-ribonucleoside in mRNA + S-adenosyl-L-methionine = a 5'-end (N(7)-methyl 5'-triphosphoguanosine)-ribonucleoside in mRNA + S-adenosyl-L-homocysteine. In terms of biological role, responsible for methylating the 5'-cap structure of mRNAs. This Debaryomyces hansenii (strain ATCC 36239 / CBS 767 / BCRC 21394 / JCM 1990 / NBRC 0083 / IGC 2968) (Yeast) protein is mRNA cap guanine-N(7) methyltransferase (ABD1).